The sequence spans 89 residues: MKKQDLIDMEGIVTESLPNAMFRVCLDNGCQVLTHISGKIRRNYIRILPGDRVRVELSPYDLTKGRIIYRLRNKYPNGISQEVFRSMRD.

The 72-residue stretch at 1–72 folds into the S1-like domain; the sequence is MKKQDLIDME…TKGRIIYRLR (72 aa).

The protein belongs to the IF-1 family. In terms of assembly, component of the 30S ribosomal translation pre-initiation complex which assembles on the 30S ribosome in the order IF-2 and IF-3, IF-1 and N-formylmethionyl-tRNA(fMet); mRNA recruitment can occur at any time during PIC assembly.

Its subcellular location is the plastid. The protein localises to the chloroplast. One of the essential components for the initiation of protein synthesis. Stabilizes the binding of IF-2 and IF-3 on the 30S subunit to which N-formylmethionyl-tRNA(fMet) subsequently binds. Helps modulate mRNA selection, yielding the 30S pre-initiation complex (PIC). Upon addition of the 50S ribosomal subunit IF-1, IF-2 and IF-3 are released leaving the mature 70S translation initiation complex. The sequence is that of Translation initiation factor IF-1, chloroplastic from Angiopteris evecta (Mule's foot fern).